We begin with the raw amino-acid sequence, 185 residues long: Calcium and integrin-binding family member 4 (185 aa).

EF-hand domains follow at residues 62-95 (RVNP…FSEQ), 97-132 (CPSL…LLKS), and 138-174 (DLLM…SPDF). Aspartate 110, asparagine 112, asparagine 114, and aspartate 121 together coordinate Ca(2+).

In terms of assembly, interacts with ITGA2B (via C-terminus cytoplasmic tail region); the interaction is stabilized/increased in a calcium- and magnesium-dependent manner. Expressed weakly in megakaryocytes and endothelial cells.

In Mus musculus (Mouse), this protein is Calcium and integrin-binding family member 4 (Cib4).